Here is a 547-residue protein sequence, read N- to C-terminus: Methionine--tRNA ligase (547 aa).

The short motif at 15–25 is the 'HIGH' region element; it reads PYANGSIHIGH. Residues cysteine 146, cysteine 149, cysteine 159, and cysteine 162 each coordinate Zn(2+). The 'KMSKS' region signature appears at 332-336; it reads KLSKS. Lysine 335 provides a ligand contact to ATP.

Belongs to the class-I aminoacyl-tRNA synthetase family. MetG type 1 subfamily. In terms of assembly, monomer. Requires Zn(2+) as cofactor.

The protein localises to the cytoplasm. The enzyme catalyses tRNA(Met) + L-methionine + ATP = L-methionyl-tRNA(Met) + AMP + diphosphate. Its function is as follows. Is required not only for elongation of protein synthesis but also for the initiation of all mRNA translation through initiator tRNA(fMet) aminoacylation. The polypeptide is Methionine--tRNA ligase (metG) (Buchnera aphidicola subsp. Acyrthosiphon pisum (strain APS) (Acyrthosiphon pisum symbiotic bacterium)).